The sequence spans 621 residues: 1-deoxy-D-xylulose-5-phosphate synthase (621 aa).

Thiamine diphosphate-binding positions include His80 and 121–123; that span reads GHS. Position 152 (Asp152) interacts with Mg(2+). Thiamine diphosphate is bound by residues 153–154, Asn181, Tyr288, and Glu370; that span reads GA. Asn181 provides a ligand contact to Mg(2+).

The protein belongs to the transketolase family. DXPS subfamily. In terms of assembly, homodimer. The cofactor is Mg(2+). It depends on thiamine diphosphate as a cofactor.

The enzyme catalyses D-glyceraldehyde 3-phosphate + pyruvate + H(+) = 1-deoxy-D-xylulose 5-phosphate + CO2. The protein operates within metabolic intermediate biosynthesis; 1-deoxy-D-xylulose 5-phosphate biosynthesis; 1-deoxy-D-xylulose 5-phosphate from D-glyceraldehyde 3-phosphate and pyruvate: step 1/1. Functionally, catalyzes the acyloin condensation reaction between C atoms 2 and 3 of pyruvate and glyceraldehyde 3-phosphate to yield 1-deoxy-D-xylulose-5-phosphate (DXP). This Edwardsiella ictaluri (strain 93-146) protein is 1-deoxy-D-xylulose-5-phosphate synthase.